A 145-amino-acid chain; its full sequence is 3-dehydroquinate dehydratase (145 aa).

Tyr22 serves as the catalytic Proton acceptor. Substrate is bound by residues Asn71, His77, and Asp84. His97 (proton donor) is an active-site residue. Substrate contacts are provided by residues 98–99 and Arg108; that span reads LS.

It belongs to the type-II 3-dehydroquinase family. In terms of assembly, homododecamer.

It carries out the reaction 3-dehydroquinate = 3-dehydroshikimate + H2O. It participates in metabolic intermediate biosynthesis; chorismate biosynthesis; chorismate from D-erythrose 4-phosphate and phosphoenolpyruvate: step 3/7. In terms of biological role, catalyzes a trans-dehydration via an enolate intermediate. The sequence is that of 3-dehydroquinate dehydratase from Francisella tularensis subsp. mediasiatica (strain FSC147).